A 399-amino-acid chain; its full sequence is Acetate kinase (399 aa).

Mg(2+) is bound at residue N10. K17 is an ATP binding site. R91 is a binding site for substrate. D148 serves as the catalytic Proton donor/acceptor. Residues 208–212, 283–285, and 331–335 each bind ATP; these read HLGNG, DCR, and GIGEN. Residue E385 participates in Mg(2+) binding.

The protein belongs to the acetokinase family. In terms of assembly, homodimer. The cofactor is Mg(2+). Mn(2+) serves as cofactor.

The protein resides in the cytoplasm. The enzyme catalyses acetate + ATP = acetyl phosphate + ADP. The protein operates within metabolic intermediate biosynthesis; acetyl-CoA biosynthesis; acetyl-CoA from acetate: step 1/2. Functionally, catalyzes the formation of acetyl phosphate from acetate and ATP. Can also catalyze the reverse reaction. The polypeptide is Acetate kinase (Shewanella oneidensis (strain ATCC 700550 / JCM 31522 / CIP 106686 / LMG 19005 / NCIMB 14063 / MR-1)).